The following is a 317-amino-acid chain: Glycerol-3-phosphate dehydrogenase [NAD(P)+] (317 aa).

4 residues coordinate NADPH: Trp-20, Arg-40, Arg-41, and Lys-88. 2 residues coordinate sn-glycerol 3-phosphate: Lys-88 and Gly-116. Ser-120 provides a ligand contact to NADPH. Lys-171, Asp-224, Ser-234, Arg-235, and Asn-236 together coordinate sn-glycerol 3-phosphate. Lys-171 functions as the Proton acceptor in the catalytic mechanism. NADPH is bound at residue Arg-235. Position 261 (Glu-261) interacts with NADPH.

It belongs to the NAD-dependent glycerol-3-phosphate dehydrogenase family.

The protein resides in the cytoplasm. It carries out the reaction sn-glycerol 3-phosphate + NAD(+) = dihydroxyacetone phosphate + NADH + H(+). It catalyses the reaction sn-glycerol 3-phosphate + NADP(+) = dihydroxyacetone phosphate + NADPH + H(+). Its pathway is membrane lipid metabolism; glycerophospholipid metabolism. Functionally, catalyzes the reduction of the glycolytic intermediate dihydroxyacetone phosphate (DHAP) to sn-glycerol 3-phosphate (G3P), the key precursor for phospholipid synthesis. This chain is Glycerol-3-phosphate dehydrogenase [NAD(P)+], found in Synechocystis sp. (strain ATCC 27184 / PCC 6803 / Kazusa).